The sequence spans 119 residues: UPF0102 protein FP2501 (119 aa).

This sequence belongs to the UPF0102 family.

This chain is UPF0102 protein FP2501, found in Flavobacterium psychrophilum (strain ATCC 49511 / DSM 21280 / CIP 103535 / JIP02/86).